The following is a 188-amino-acid chain: Ribosome-recycling factor (188 aa).

The protein belongs to the RRF family.

It localises to the cytoplasm. In terms of biological role, responsible for the release of ribosomes from messenger RNA at the termination of protein biosynthesis. May increase the efficiency of translation by recycling ribosomes from one round of translation to another. The sequence is that of Ribosome-recycling factor from Cereibacter sphaeroides (strain ATCC 17025 / ATH 2.4.3) (Rhodobacter sphaeroides).